The sequence spans 513 residues: GMP synthase [glutamine-hydrolyzing] (513 aa).

Positions 3-192 (TVVVLDYGSQ…VSKVAKMEKN (190 aa)) constitute a Glutamine amidotransferase type-1 domain. Cys-80 acts as the Nucleophile in catalysis. Residues His-166 and Glu-168 contribute to the active site. The 196-residue stretch at 193–388 (WKMTDFIEEK…LGLPDEMINR (196 aa)) folds into the GMPS ATP-PPase domain. An ATP-binding site is contributed by 220–226 (SGGVDSS).

Homodimer.

The enzyme catalyses XMP + L-glutamine + ATP + H2O = GMP + L-glutamate + AMP + diphosphate + 2 H(+). It functions in the pathway purine metabolism; GMP biosynthesis; GMP from XMP (L-Gln route): step 1/1. Its function is as follows. Catalyzes the synthesis of GMP from XMP. This is GMP synthase [glutamine-hydrolyzing] from Thermosipho africanus (strain TCF52B).